The chain runs to 48 residues: SPbeta prophage-derived uncharacterized protein YotE (48 aa).

This Bacillus subtilis (strain 168) protein is SPbeta prophage-derived uncharacterized protein YotE (yotE).